Here is a 1032-residue protein sequence, read N- to C-terminus: Unconventional myosin-Ih (1032 aa).

The Myosin motor domain maps to 12–701 (GVQDFVLLDA…TLFATEDAFE (690 aa)). ATP is bound at residue 105–112 (GESGAGKT). At serine 365 the chain carries Phosphoserine. Residues 578-600 (LSSLLETLISKEPSYIRCIKPND) are actin-binding. IQ domains are found at residues 704–726 (KHQL…EYVK) and 727–756 (KRQA…AVRI). The TH1 domain maps to 855–1029 (KDGYTESLNQ…NGQLTVVSVR (175 aa)).

This sequence belongs to the TRAFAC class myosin-kinesin ATPase superfamily. Myosin family.

Its function is as follows. Myosins are actin-based motor molecules with ATPase activity. Unconventional myosins serve in intracellular movements. Their highly divergent tails are presumed to bind to membranous compartments, which would be moved relative to actin filaments. The protein is Unconventional myosin-Ih (MYO1H) of Homo sapiens (Human).